The sequence spans 365 residues: tRNA 2-selenouridine synthase (365 aa).

The Rhodanese domain occupies 12–136; sequence FLHDVPLLDV…LRMFLIDTTQ (125 aa). Residue cysteine 95 is the S-selanylcysteine intermediate of the active site.

This sequence belongs to the SelU family. In terms of assembly, monomer.

The catalysed reaction is 5-methylaminomethyl-2-thiouridine(34) in tRNA + selenophosphate + (2E)-geranyl diphosphate + H2O + H(+) = 5-methylaminomethyl-2-selenouridine(34) in tRNA + (2E)-thiogeraniol + phosphate + diphosphate. The enzyme catalyses 5-methylaminomethyl-2-thiouridine(34) in tRNA + (2E)-geranyl diphosphate = 5-methylaminomethyl-S-(2E)-geranyl-thiouridine(34) in tRNA + diphosphate. It catalyses the reaction 5-methylaminomethyl-S-(2E)-geranyl-thiouridine(34) in tRNA + selenophosphate + H(+) = 5-methylaminomethyl-2-(Se-phospho)selenouridine(34) in tRNA + (2E)-thiogeraniol. It carries out the reaction 5-methylaminomethyl-2-(Se-phospho)selenouridine(34) in tRNA + H2O = 5-methylaminomethyl-2-selenouridine(34) in tRNA + phosphate. Involved in the post-transcriptional modification of the uridine at the wobble position (U34) of tRNA(Lys), tRNA(Glu) and tRNA(Gln). Catalyzes the conversion of 2-thiouridine (S2U-RNA) to 2-selenouridine (Se2U-RNA). Acts in a two-step process involving geranylation of 2-thiouridine (S2U) to S-geranyl-2-thiouridine (geS2U) and subsequent selenation of the latter derivative to 2-selenouridine (Se2U) in the tRNA chain. The sequence is that of tRNA 2-selenouridine synthase from Verminephrobacter eiseniae (strain EF01-2).